Reading from the N-terminus, the 305-residue chain is Ribonuclease Z (305 aa).

Positions 61, 63, 65, 66, 141, 209, and 268 each coordinate Zn(2+). The active-site Proton acceptor is the Asp65.

This sequence belongs to the RNase Z family. As to quaternary structure, homodimer. Zn(2+) serves as cofactor.

It carries out the reaction Endonucleolytic cleavage of RNA, removing extra 3' nucleotides from tRNA precursor, generating 3' termini of tRNAs. A 3'-hydroxy group is left at the tRNA terminus and a 5'-phosphoryl group is left at the trailer molecule.. In terms of biological role, zinc phosphodiesterase, which displays some tRNA 3'-processing endonuclease activity. Probably involved in tRNA maturation, by removing a 3'-trailer from precursor tRNA. The chain is Ribonuclease Z from Clostridioides difficile (strain 630) (Peptoclostridium difficile).